We begin with the raw amino-acid sequence, 124 residues long: SPbeta prophage-derived uncharacterized protein YoqO (124 aa).

The next 2 helical transmembrane spans lie at 54–74 (LVVI…LLSF) and 88–108 (VIFI…ISIM).

The protein resides in the cell membrane. This Bacillus subtilis (strain 168) protein is SPbeta prophage-derived uncharacterized protein YoqO (yoqO).